Here is a 96-residue protein sequence, read N- to C-terminus: Small ribosomal subunit protein bS6 (96 aa).

The protein belongs to the bacterial ribosomal protein bS6 family.

In terms of biological role, binds together with bS18 to 16S ribosomal RNA. This Corynebacterium aurimucosum (strain ATCC 700975 / DSM 44827 / CIP 107346 / CN-1) (Corynebacterium nigricans) protein is Small ribosomal subunit protein bS6.